Here is a 616-residue protein sequence, read N- to C-terminus: UvrABC system protein C (616 aa).

The 86-residue stretch at 12–97 folds into the GIY-YIG domain; that stretch reads NDAGVYQYFD…IKQLKPKYNI (86 aa). A UVR domain is found at 203–238; it reads TKLISKLNEKMLQYSNDFRFEEAMTLRDRIKTIEKS.

The protein belongs to the UvrC family. Interacts with UvrB in an incision complex.

Its subcellular location is the cytoplasm. Its function is as follows. The UvrABC repair system catalyzes the recognition and processing of DNA lesions. UvrC both incises the 5' and 3' sides of the lesion. The N-terminal half is responsible for the 3' incision and the C-terminal half is responsible for the 5' incision. This is UvrABC system protein C from Aliarcobacter butzleri (strain RM4018) (Arcobacter butzleri).